Consider the following 1313-residue polypeptide: Target of rapamycin complex 1 subunit mip1 (1313 aa).

Positions 1-35 (MNDRISEVSGSSRARRSVLSYGTTETGSDRYTENS) are disordered. S834, S837, and S882 each carry phosphoserine. WD repeat units follow at residues 986 to 1029 (TFNN…NSFK), 1033 to 1074 (SATT…KVEL), 1087 to 1126 (GDRN…CYAN), 1130 to 1170 (RSSN…RDSL), 1176 to 1216 (EHSS…SLQT), 1219 to 1259 (TDNS…NTFR), and 1268 to 1308 (PKPS…IHTD).

This sequence belongs to the WD repeat RAPTOR family. In terms of assembly, the target of rapamycin complex 1 (TORC1) is composed of at least mip1, pop3/wat1, tco89, toc1 and tor2.

The protein resides in the cytoplasm. Functionally, component of TORC1, which regulates multiple cellular processes to control cell growth in response to environmental signals. Tor2 is essential for growth. Nutrient limitation and environmental stress signals cause inactivation of TORC1. Active TORC1 positively controls cell growth and ribosome biogenesis by regulating ribosomal protein gene expression. TORC1 negatively controls G1 cell-cycle arrest, sexual development and amino acid uptake. Represses mating, meiosis and sporulation efficiency by interfering with the functions of the transcription factor ste11 and the meiosis-promoting RNA-binding protein mei2. In Schizosaccharomyces pombe (strain 972 / ATCC 24843) (Fission yeast), this protein is Target of rapamycin complex 1 subunit mip1.